The sequence spans 146 residues: Small ribosomal subunit protein uS9x (146 aa).

The protein belongs to the universal ribosomal protein uS9 family.

The protein resides in the cytoplasm. The chain is Small ribosomal subunit protein uS9x (RPS16C) from Arabidopsis thaliana (Mouse-ear cress).